Reading from the N-terminus, the 232-residue chain is Probable GTP-binding protein EngB (232 aa).

In terms of domain architecture, EngB-type G spans 13–188; the sequence is IGLEVAFAGR…AGVMGNWYEY (176 aa). GTP contacts are provided by residues 21–28, 48–52, 67–70, 134–137, and 167–169; these read GRSNAGKS, GRTQM, DLPG, TKAD, and FSA. The Mg(2+) site is built by S28 and T50.

Belongs to the TRAFAC class TrmE-Era-EngA-EngB-Septin-like GTPase superfamily. EngB GTPase family. The cofactor is Mg(2+).

In terms of biological role, necessary for normal cell division and for the maintenance of normal septation. The polypeptide is Probable GTP-binding protein EngB (Psychrobacter arcticus (strain DSM 17307 / VKM B-2377 / 273-4)).